The chain runs to 369 residues: tRNA 2-selenouridine synthase (369 aa).

Positions 12-136 (FLEDTPLMDV…LRNFLFETTR (125 aa)) constitute a Rhodanese domain. Cys95 serves as the catalytic S-selanylcysteine intermediate.

The protein belongs to the SelU family. Monomer.

It catalyses the reaction 5-methylaminomethyl-2-thiouridine(34) in tRNA + selenophosphate + (2E)-geranyl diphosphate + H2O + H(+) = 5-methylaminomethyl-2-selenouridine(34) in tRNA + (2E)-thiogeraniol + phosphate + diphosphate. It carries out the reaction 5-methylaminomethyl-2-thiouridine(34) in tRNA + (2E)-geranyl diphosphate = 5-methylaminomethyl-S-(2E)-geranyl-thiouridine(34) in tRNA + diphosphate. The catalysed reaction is 5-methylaminomethyl-S-(2E)-geranyl-thiouridine(34) in tRNA + selenophosphate + H(+) = 5-methylaminomethyl-2-(Se-phospho)selenouridine(34) in tRNA + (2E)-thiogeraniol. The enzyme catalyses 5-methylaminomethyl-2-(Se-phospho)selenouridine(34) in tRNA + H2O = 5-methylaminomethyl-2-selenouridine(34) in tRNA + phosphate. In terms of biological role, involved in the post-transcriptional modification of the uridine at the wobble position (U34) of tRNA(Lys), tRNA(Glu) and tRNA(Gln). Catalyzes the conversion of 2-thiouridine (S2U-RNA) to 2-selenouridine (Se2U-RNA). Acts in a two-step process involving geranylation of 2-thiouridine (S2U) to S-geranyl-2-thiouridine (geS2U) and subsequent selenation of the latter derivative to 2-selenouridine (Se2U) in the tRNA chain. This Pseudomonas paraeruginosa (strain DSM 24068 / PA7) (Pseudomonas aeruginosa (strain PA7)) protein is tRNA 2-selenouridine synthase.